Consider the following 545-residue polypeptide: Thermosome subunit alpha (545 aa).

Belongs to the TCP-1 chaperonin family. Forms a Heterooligomeric complex of two stacked eight-membered rings.

Functionally, molecular chaperone; binds unfolded polypeptides in vitro, and has a weak ATPase activity. The sequence is that of Thermosome subunit alpha (thsA) from Archaeoglobus fulgidus (strain ATCC 49558 / DSM 4304 / JCM 9628 / NBRC 100126 / VC-16).